Consider the following 248-residue polypeptide: N-acylneuraminate-9-phosphatase (248 aa).

Mg(2+) is bound at residue aspartate 12. 5 residues coordinate phosphate: leucine 13, aspartate 14, threonine 131, asparagine 132, and lysine 164. Aspartate 14 is a binding site for Mg(2+). A Mg(2+)-binding site is contributed by aspartate 189.

This sequence belongs to the HAD-like hydrolase superfamily. NANP family. The cofactor is Mg(2+).

It carries out the reaction N-acetylneuraminate 9-phosphate + H2O = N-acetylneuraminate + phosphate. The catalysed reaction is N-glycoloylneuraminate 9-phosphate + H2O = N-glycoloylneuraminate + phosphate. It functions in the pathway amino-sugar metabolism; N-acetylneuraminate biosynthesis. With respect to regulation, inhibited by calcium. Inhibited by vanadate, sodium orthovanate and phosphonate. In terms of biological role, catalyzes the dephosphorylation of N-acylneuraminate 9-phosphate (Neu5Ac-9-P) to sialic acid N-acetylneuraminic acid (Neu5Ac). May also use N-glycoloylneuraminate 9-phosphate as substrate. This chain is N-acylneuraminate-9-phosphatase, found in Mus musculus (Mouse).